The primary structure comprises 231 residues: Endo-1,4-beta-xylanase 4 (231 aa).

Residues 1–18 (MVSFTTILVAATAALVAA) form the signal peptide. The GH11 domain occupies 42 to 230 (GGTPSSTGTH…SSGSSTVTIQ (189 aa)). Asparagine 99 carries N-linked (GlcNAc...) asparagine glycosylation. Glutamate 126 acts as the Nucleophile in catalysis. Glutamate 217 functions as the Proton donor in the catalytic mechanism.

Belongs to the glycosyl hydrolase 11 (cellulase G) family.

The protein resides in the secreted. The enzyme catalyses Endohydrolysis of (1-&gt;4)-beta-D-xylosidic linkages in xylans.. The protein operates within glycan degradation; xylan degradation. Its function is as follows. Endo-1,4-beta-xylanase involved in the hydrolysis of xylan, a major structural heterogeneous polysaccharide found in plant biomass representing the second most abundant polysaccharide in the biosphere, after cellulose. The sequence is that of Endo-1,4-beta-xylanase 4 (XYL4) from Pyricularia grisea (Crabgrass-specific blast fungus).